A 332-amino-acid polypeptide reads, in one-letter code: Lipoyl synthase (332 aa).

Positions 55, 60, 66, 81, 85, 88, and 292 each coordinate [4Fe-4S] cluster. Residues 67–281 (WEDREATFLI…SDEAERIGFL (215 aa)) form the Radical SAM core domain.

This sequence belongs to the radical SAM superfamily. Lipoyl synthase family. Requires [4Fe-4S] cluster as cofactor.

It localises to the cytoplasm. It carries out the reaction [[Fe-S] cluster scaffold protein carrying a second [4Fe-4S](2+) cluster] + N(6)-octanoyl-L-lysyl-[protein] + 2 oxidized [2Fe-2S]-[ferredoxin] + 2 S-adenosyl-L-methionine + 4 H(+) = [[Fe-S] cluster scaffold protein] + N(6)-[(R)-dihydrolipoyl]-L-lysyl-[protein] + 4 Fe(3+) + 2 hydrogen sulfide + 2 5'-deoxyadenosine + 2 L-methionine + 2 reduced [2Fe-2S]-[ferredoxin]. It functions in the pathway protein modification; protein lipoylation via endogenous pathway; protein N(6)-(lipoyl)lysine from octanoyl-[acyl-carrier-protein]: step 2/2. Its function is as follows. Catalyzes the radical-mediated insertion of two sulfur atoms into the C-6 and C-8 positions of the octanoyl moiety bound to the lipoyl domains of lipoate-dependent enzymes, thereby converting the octanoylated domains into lipoylated derivatives. The sequence is that of Lipoyl synthase from Beutenbergia cavernae (strain ATCC BAA-8 / DSM 12333 / CCUG 43141 / JCM 11478 / NBRC 16432 / NCIMB 13614 / HKI 0122).